A 310-amino-acid chain; its full sequence is Olfactory receptor 5AR1 (310 aa).

The Extracellular portion of the chain corresponds to 1–25; sequence MDKENHSVVTEFVFMGITQDPQLQI. Asn-5 carries N-linked (GlcNAc...) asparagine glycosylation. The helical transmembrane segment at 26-46 threads the bilayer; sequence IFFVVFLLVYLVNVIGNVGMI. Topologically, residues 47 to 54 are cytoplasmic; the sequence is ILIITDSQ. A helical transmembrane segment spans residues 55–75; it reads LHTPMYFFLCNLSFVDLGYSS. Residues 76 to 99 are Extracellular-facing; sequence AIAPRMLADFLTKHKVISFSSCAT. Cys-97 and Cys-189 are disulfide-bonded. Residues 100–120 traverse the membrane as a helical segment; it reads QFAFFVGFVDAECYVLAAMAY. The Cytoplasmic portion of the chain corresponds to 121-133; sequence DRFVAICRPLHYS. A helical membrane pass occupies residues 134–154; it reads TLMSKKVCLVLMLGSYFAGLV. At 155–196 the chain is on the extracellular side; sequence SLVAHTSLTFSLSYCGSNIINHFFCEIPPLLALSCSDTYISE. A helical membrane pass occupies residues 197–217; that stretch reads ILLFSLCGFIEFSTILIIFIS. Cu cation is bound at residue Cys-203. The Cytoplasmic segment spans residues 218 to 237; the sequence is YAFILIAIIRIRSAEGRLKA. Residues 238–258 traverse the membrane as a helical segment; sequence FSTCGSHLTGVTLFYGTVMFM. Residues Met-256 and Arg-261 each contribute to the Cu cation site. Topologically, residues 259 to 271 are extracellular; sequence YLRPTSSYSLDQD. A helical membrane pass occupies residues 272–292; that stretch reads KWASVFYTIIIPMLNPLIYSL. Residues 293 to 310 are Cytoplasmic-facing; it reads RNKDVKAAFKKLIGKKPQ.

Belongs to the G-protein coupled receptor 1 family.

The protein resides in the cell membrane. Its activity is regulated as follows. Copper binding enhances receptor activity in response to odorant binding. In terms of biological role, olfactory receptor that is activated by the binding of organosulfur odorants with thioether groups such as (methylthio)methanethiol (MTMT). The activity of this receptor is mediated by G proteins which activate adenylyl cyclase. The polypeptide is Olfactory receptor 5AR1 (Mus musculus (Mouse)).